Here is a 655-residue protein sequence, read N- to C-terminus: FYVE, RhoGEF and PH domain-containing protein 2 (655 aa).

A phosphoserine mark is found at S11 and S48. The interval V18 to E64 is disordered. Basic and acidic residues predominate over residues Q32–N56. Residues P102 to A290 form the DH domain. In terms of domain architecture, PH 1 spans T319 to D418. An FYVE-type zinc finger spans residues D458 to T518. Zn(2+) contacts are provided by C464, C467, C481, C484, C489, C492, C510, and C513. Residues Q544 to S641 form the PH 2 domain. S654 carries the phosphoserine modification.

It localises to the cytoplasm. Its subcellular location is the cytoskeleton. The protein localises to the nucleus. The protein resides in the early endosome. It is found in the early endosome membrane. It localises to the cell projection. Its subcellular location is the ruffle membrane. In terms of biological role, activates CDC42, a member of the Ras-like family of Rho- and Rac proteins, by exchanging bound GDP for free GTP. Activates JNK1 via CDC42 but not RAC1. Binds to phosphatidylinositol 4,5-bisphosphate, phosphatidylinositol 3,4,5-trisphosphate, phosphatidylinositol 5-monophosphate, phosphatidylinositol 4-monophosphate and phosphatidylinositol 3-monophosphate. This chain is FYVE, RhoGEF and PH domain-containing protein 2 (FGD2), found in Homo sapiens (Human).